The primary structure comprises 367 residues: Choline-phosphate cytidylyltransferase A (367 aa).

Met1 is modified (N-acetylmethionine). Residues Met1–Pro31 are disordered. The residue at position 8 (Lys8) is an N6-acetyllysine. Residues Ile84, Phe85, His92, and Lys122 each contribute to the CTP site. Phosphocholine contacts are provided by Lys122 and Trp151. The CTP site is built by His168, Asp169, Tyr173, Gln195, Arg196, Thr197, and Ile200. 2 amphipathic regions span residues Lys228 to Gly287 and Ala298 to Ser315. Ser233 is modified (phosphoserine). The tract at residues Ile272–Phe293 is autoinhibitory (AI). Residues Ala313–Asp367 form a disordered region. Ser315 carries the phosphoserine; by PKC modification. Over residues Ser315–Pro324 the composition is skewed to polar residues. Ser319, Ser321, Ser322, and Ser323 each carry phosphoserine. The stretch at Ser319–Pro324 is repeat 1. The tract at residues Ser319–Pro348 is 3 X repeats. Thr325 is subject to Phosphothreonine. Residues Ser329 and Ser331 each carry the phosphoserine modification. The stretch at Ser329–Ser333 is one 2; approximate repeat. The segment covering Pro330 to Ser352 has biased composition (low complexity). Ser333 bears the Phosphoserine; by PKC mark. The residue at position 342 (Thr342) is a Phosphothreonine. Ser343, Ser345, Ser346, Ser347, Ser350, and Ser352 each carry phosphoserine. Repeat 3 spans residues Ser343 to Pro348. Thr358 is subject to Phosphothreonine. Ser362 carries the post-translational modification Phosphoserine; by CK2.

It belongs to the cytidylyltransferase family. In terms of assembly, homodimer. Post-translationally, the serine residues of the C-terminus are phosphorylated. The inactive soluble form is stabilized by phosphorylation, the active membrane bound form is promoted by anionic lipids or diacylglycerol, and is stabilized by dephosphorylation. The N-terminus is blocked. In terms of processing, monoubiquitinated by the SCF(FBXL2) complex, leading to proteasomal degradation.

It is found in the cytoplasm. It localises to the cytosol. The protein localises to the membrane. Its subcellular location is the endoplasmic reticulum membrane. The protein resides in the nucleus. The catalysed reaction is phosphocholine + CTP + H(+) = CDP-choline + diphosphate. The protein operates within phospholipid metabolism; phosphatidylcholine biosynthesis; phosphatidylcholine from phosphocholine: step 1/2. Its activity is regulated as follows. Interconverts between an inactive cytosolic form and an active membrane-bound form. Activation involves disruption of an inhibitory interaction between helices at the base of the active site and the autoinhibitory (AI) region. Activated by N-methylethanolamine. Activated by oleic acid-containing phosphatidylcholine vesicles. In terms of biological role, catalyzes the key rate-limiting step in the CDP-choline pathway for phosphatidylcholine biosynthesis. This is Choline-phosphate cytidylyltransferase A (Pcyt1a) from Rattus norvegicus (Rat).